A 322-amino-acid polypeptide reads, in one-letter code: ATP-dependent 6-phosphofructokinase (322 aa).

Position 11 (Gly11) interacts with ATP. Position 21-25 (21-25 (RAVVR)) interacts with ADP. Residues 72-73 (RC) and 102-105 (GDGS) contribute to the ATP site. Asp103 lines the Mg(2+) pocket. Position 127-129 (127-129 (TID)) interacts with substrate. Asp129 serves as the catalytic Proton acceptor. Arg156 contacts ADP. Substrate-binding positions include Arg164 and 171–173 (MGR). ADP contacts are provided by residues 187–189 (GAE), Arg213, and 215–217 (KKH). Residues Glu224, Arg245, and 251 to 254 (HIQR) contribute to the substrate site.

The protein belongs to the phosphofructokinase type A (PFKA) family. ATP-dependent PFK group I subfamily. Prokaryotic clade 'B1' sub-subfamily. As to quaternary structure, homotetramer. The cofactor is Mg(2+).

The protein resides in the cytoplasm. It catalyses the reaction beta-D-fructose 6-phosphate + ATP = beta-D-fructose 1,6-bisphosphate + ADP + H(+). It participates in carbohydrate degradation; glycolysis; D-glyceraldehyde 3-phosphate and glycerone phosphate from D-glucose: step 3/4. Allosterically activated by ADP and other diphosphonucleosides, and allosterically inhibited by phosphoenolpyruvate. Its function is as follows. Catalyzes the phosphorylation of D-fructose 6-phosphate to fructose 1,6-bisphosphate by ATP, the first committing step of glycolysis. This is ATP-dependent 6-phosphofructokinase from Staphylococcus carnosus (strain TM300).